The primary structure comprises 120 residues: Secreted RxLR effector protein RXLR-C26 (120 aa).

The first 29 residues, Met1–Gly29, serve as a signal peptide directing secretion. The RxLR-dEER signature appears at Arg57–Arg77. N-linked (GlcNAc...) asparagine glycosylation occurs at Asn71.

The protein belongs to the RxLR effector family.

Its subcellular location is the secreted. It localises to the host cytoplasm. The protein resides in the host nucleus. Secreted effector that does not suppress pattern-triggered immunity (PTI) in plant host. The sequence is that of Secreted RxLR effector protein RXLR-C26 from Plasmopara halstedii (Downy mildew of sunflower).